The sequence spans 151 residues: Group 10 secretory phospholipase A2 (151 aa).

The first 17 residues, 1–17 (MLLLLLLLLLGPGSCLS), serve as a signal peptide directing secretion. A propeptide spanning residues 18-28 (EATRRSHVYKR) is cleaved from the precursor. Disulfide bonds link Cys-39–Cys-97, Cys-53–Cys-143, Cys-55–Cys-71, Cys-70–Cys-125, Cys-76–Cys-150, Cys-77–Cys-118, Cys-86–Cys-111, and Cys-104–Cys-116. The Ca(2+) site is built by Tyr-54, Gly-56, and Gly-58. The active site involves His-74. Asp-75 serves as a coordination point for Ca(2+). The active site involves Asp-119.

It belongs to the phospholipase A2 family. As to quaternary structure, interacts with PLA2R1; this interaction mediates PLA2G10 clearance and inactivation. It depends on Ca(2+) as a cofactor.

It localises to the secreted. Its subcellular location is the lysosome. The protein localises to the cytoplasmic vesicle. The protein resides in the secretory vesicle. It is found in the acrosome. It carries out the reaction a 1,2-diacyl-sn-glycero-3-phosphocholine + H2O = a 1-acyl-sn-glycero-3-phosphocholine + a fatty acid + H(+). It catalyses the reaction 1-hexadecanoyl-2-(9Z-octadecenoyl)-sn-glycero-3-phosphocholine + H2O = 1-hexadecanoyl-sn-glycero-3-phosphocholine + (9Z)-octadecenoate + H(+). The enzyme catalyses 1-octadecanoyl-2-(5Z,8Z,11Z,14Z-eicosatetraenoyl)-sn-glycero-3-phosphocholine + H2O = 1-octadecanoyl-sn-glycero-3-phosphocholine + (5Z,8Z,11Z,14Z)-eicosatetraenoate + H(+). The catalysed reaction is 1,2-dihexadecanoyl-sn-glycero-3-phosphocholine + H2O = 1-hexadecanoyl-sn-glycero-3-phosphocholine + hexadecanoate + H(+). It carries out the reaction 1-hexadecanoyl-2-(9Z-octadecenoyl)-sn-glycero-3-phosphoglycerol + H2O = 1-hexadecanoyl-sn-glycero-3-phosphoglycerol + (9Z)-octadecenoate + H(+). It catalyses the reaction 1,2-dihexadecanoyl-sn-glycero-3-phospho-(1'-sn-glycerol) + H2O = 1-hexadecanoyl-sn-glycero-3-phospho-(1'-sn-glycerol) + hexadecanoate + H(+). The enzyme catalyses 1-hexadecanoyl-2-(9Z-octadecenoyl)-sn-glycero-3-phospho-L-serine + H2O = 1-hexadecanoyl-sn-glycero-3-phospho-L-serine + (9Z)-octadecenoate + H(+). The catalysed reaction is 1-hexadecanoyl-2-(9Z,12Z-octadecadienoyl)-sn-glycero-3-phosphoethanolamine + H2O = 1-hexadecanoyl-sn-glycero-3-phosphoethanolamine + (9Z,12Z)-octadecadienoate + H(+). It carries out the reaction 1-hexadecanoyl-2-(9Z-octadecenoyl)-sn-glycero-3-phosphate + H2O = 1-hexadecanoyl-sn-glycero-3-phosphate + (9Z)-octadecenoate + H(+). It catalyses the reaction 1-O-hexadecyl-2-acetyl-sn-glycero-3-phosphocholine + H2O = 1-O-hexadecyl-sn-glycero-3-phosphocholine + acetate + H(+). Functionally, secretory calcium-dependent phospholipase A2 that primarily targets extracellular phospholipids. Hydrolyzes the ester bond of the fatty acyl group attached at sn-2 position of phospholipids with preference for phosphatidylcholines and phosphatidylglycerols over phosphatidylethanolamines. Preferentially releases sn-2 omega-6 and omega-3 polyunsaturated fatty acyl (PUFA) chains over saturated fatty acyls. Contributes to phospholipid remodeling of very low-density lipoprotein (VLDL), low-density lipoprotein (LDL) and high-density lipoprotein (HDL) particles. Hydrolyzes LDL phospholipids releasing unsaturated fatty acids that regulate macrophage differentiation toward foam cells. Efficiently hydrolyzes and inactivates platelet activating factor (PAF), a potent lipid mediator present in oxidized LDL. May act in an autocrine and paracrine manner. Secreted by lung epithelium, targets membrane phospholipids of infiltrating eosinophils, releasing arachidonate and boosting eicosanoid and cysteinyl leukotriene synthesis involved in airway inflammatory response. Secreted by gut epithelium, hydrolyzes dietary and biliary phosphatidylcholines in the gastrointestinal lumen. Plays a stem cell regulator role in colon epithelium. Within intracellular compartment, mediates Paneth-like cell differentiation and its stem cell supporting functions by inhibiting the Wnt signaling pathway in intestinal stem cell (ISC). Secreted in the intestinal lumen upon inflammation, acts in an autocrine way and promotes prostaglandin E2 synthesis that stimulates Wnt signaling pathway in ISCs and tissue regeneration. May participate in hair follicle morphogenesis by regulating phosphatidylethanolamines metabolism at the outermost epithelial layer and facilitating melanin synthesis. By releasing lysophosphatidylcholines (LPCs) at sperm acrosome, controls sperm cell capacitation, acrosome reaction and overall fertility. May promote neurite outgrowth in neuron fibers involved in nociception. Contributes to lipid remodeling of cellular membranes and generation of lipid mediators involved in pathogen clearance. Cleaves sn-2 fatty acyl chains of phosphatidylglycerols and phosphatidylethanolamines, which are major components of membrane phospholipids in bacteria. Displays bactericidal activity against Gram-positive bacteria by directly hydrolyzing phospholipids of the bacterial membrane. In pulmonary epithelium, may contribute to host defense response against adenoviral infection. Prevents adenovirus entry into host cells by hydrolyzing host cell plasma membrane, releasing C16:0 LPCs that inhibit virus-mediated membrane fusion and viral infection. Likely prevents adenoviral entry into the endosomes of host cells. May play a role in maturation and activation of innate immune cells including macrophages, group 2 innate lymphoid cells and mast cells. The chain is Group 10 secretory phospholipase A2 (Pla2g10) from Rattus norvegicus (Rat).